A 272-amino-acid polypeptide reads, in one-letter code: NH(3)-dependent NAD(+) synthetase (272 aa).

45 to 52 (GISGGQDS) serves as a coordination point for ATP. Asp-51 contributes to the Mg(2+) binding site. Arg-138 serves as a coordination point for deamido-NAD(+). Thr-158 is a binding site for ATP. Position 163 (Glu-163) interacts with Mg(2+). Lys-171 and Asp-178 together coordinate deamido-NAD(+). Lys-187 and Thr-209 together coordinate ATP. Position 258–259 (258–259 (HK)) interacts with deamido-NAD(+).

It belongs to the NAD synthetase family. As to quaternary structure, homodimer.

It carries out the reaction deamido-NAD(+) + NH4(+) + ATP = AMP + diphosphate + NAD(+) + H(+). It participates in cofactor biosynthesis; NAD(+) biosynthesis; NAD(+) from deamido-NAD(+) (ammonia route): step 1/1. Catalyzes the ATP-dependent amidation of deamido-NAD to form NAD. Uses ammonia as a nitrogen source. This is NH(3)-dependent NAD(+) synthetase from Bacillus cereus (strain Q1).